Consider the following 89-residue polypeptide: DNA maturase A (89 aa).

Gp18 and gp19 associate with DNA and prohead.

Its function is as follows. During the growth of this phage, DNA is synthesized as concatemers. During DNA packaging mature monomers are cut from the concatemers. This is DNA maturase A (18) from Enterobacteria phage T3 (Bacteriophage T3).